We begin with the raw amino-acid sequence, 436 residues long: DEAD-box ATP-dependent RNA helicase CshB (436 aa).

Positions 4 to 32 (QTFTQYDFKPFLIDAVRELRFTEPTGIQQ) match the Q motif motif. The Helicase ATP-binding domain occupies 35-209 (FPVVKKGVSV…KKYMENPEHI (175 aa)). 48-55 (SQTGSGKT) contacts ATP. The DEAD box motif lies at 157–160 (DEAD). Positions 240–388 (MLLQFKPYLA…WADLGERRRR (149 aa)) constitute a Helicase C-terminal domain. Positions 385 to 436 (RRRRKSRKKPNDELDVMATKVIKKPKKVKPNYKRKLATERDKVKRKYSNKKR) are disordered. Basic residues-rich tracts occupy residues 405-419 (VIKK…YKRK) and 427-436 (VKRKYSNKKR).

This sequence belongs to the DEAD box helicase family. CshB subfamily.

Its subcellular location is the cytoplasm. It carries out the reaction ATP + H2O = ADP + phosphate + H(+). In terms of biological role, probable DEAD-box RNA helicase. May work in conjunction with the cold shock proteins to ensure proper initiation of transcription at low and optimal temperatures. Unwinds dsRNA in both 5'- and 3'-directions and shows RNA-dependent ATPase activity. Probably has a somewhat redundant function with CshA, as cshA can partially complement the growth effects of a cshB deletion. This Bacillus cereus (strain ATCC 14579 / DSM 31 / CCUG 7414 / JCM 2152 / NBRC 15305 / NCIMB 9373 / NCTC 2599 / NRRL B-3711) protein is DEAD-box ATP-dependent RNA helicase CshB.